A 125-amino-acid chain; its full sequence is Snaclec B7 (125 aa).

3 disulfide bridges follow: Cys-2-Cys-13, Cys-30-Cys-119, and Cys-96-Cys-111. Residues 9-120 (HEGHCYKVFK…CNISQYFVCQ (112 aa)) form the C-type lectin domain. Residue Asn-112 is glycosylated (N-linked (GlcNAc...) asparagine).

The protein belongs to the snaclec family. Heterodimer; disulfide-linked. Expressed by the venom gland.

It is found in the secreted. Its function is as follows. Interferes with one step of hemostasis (modulation of platelet aggregation, or coagulation cascade, for example). This Macrovipera lebetinus (Levantine viper) protein is Snaclec B7.